Here is a 289-residue protein sequence, read N- to C-terminus: Diaminopimelate epimerase (289 aa).

Substrate is bound by residues asparagine 13, glutamine 47, and asparagine 67. Cysteine 76 functions as the Proton donor in the catalytic mechanism. Residues 77–78, asparagine 167, asparagine 200, and 218–219 contribute to the substrate site; these read GN and ER. Cysteine 227 (proton acceptor) is an active-site residue. Position 228–229 (228–229) interacts with substrate; that stretch reads GT.

The protein belongs to the diaminopimelate epimerase family. Homodimer.

It is found in the cytoplasm. The catalysed reaction is (2S,6S)-2,6-diaminopimelate = meso-2,6-diaminopimelate. It participates in amino-acid biosynthesis; L-lysine biosynthesis via DAP pathway; DL-2,6-diaminopimelate from LL-2,6-diaminopimelate: step 1/1. Functionally, catalyzes the stereoinversion of LL-2,6-diaminopimelate (L,L-DAP) to meso-diaminopimelate (meso-DAP), a precursor of L-lysine and an essential component of the bacterial peptidoglycan. This is Diaminopimelate epimerase from Burkholderia thailandensis (strain ATCC 700388 / DSM 13276 / CCUG 48851 / CIP 106301 / E264).